The primary structure comprises 150 residues: Flagellar assembly factor FliW (150 aa).

Belongs to the FliW family. Interacts with translational regulator CsrA and flagellin(s).

It localises to the cytoplasm. Functionally, acts as an anti-CsrA protein, binds CsrA and prevents it from repressing translation of its target genes, one of which is flagellin. Binds to flagellin and participates in the assembly of the flagellum. This chain is Flagellar assembly factor FliW, found in Leptospira interrogans serogroup Icterohaemorrhagiae serovar copenhageni (strain Fiocruz L1-130).